The sequence spans 254 residues: Tabinhibitin 6 (254 aa).

The signal sequence occupies residues 1–22 (MLPYWCPLLLAALVLQYATIDA). The short motif at 31–33 (RGD) is the Cell attachment site element. The 145-residue stretch at 66–210 (LSKINDVRDH…KARALLTCNF (145 aa)) folds into the SCP domain.

The protein belongs to the CRISP family. In terms of tissue distribution, expressed in salivary glands.

The protein resides in the secreted. In terms of biological role, inhibits platelet aggregation induced by all agonists tested (ADP, arachidonic acid, the thromboxane A2 analog U46619, thrombin, and snake venom snaclecs (TMVA that activates platelet through GPIB, and stejnulxin that specifically acts through GPVI (GP6))). May act by competing with fibrinogen for binding to glycoprotein IIb/IIIa (ITGA2B/ITGB3). This Tabanus yao (Horsefly) protein is Tabinhibitin 6.